A 176-amino-acid polypeptide reads, in one-letter code: SELAGTIIDGASLTFEVLDKVLGELGKVSRKIAVGIDNESGGTWTALNAYFRSGTTDVILPEVVPNTKALLYSGRKSSGPVATGAVAAFAYYMSNGNTLGVMFSVPFDYNWYSNWWDVKIYPGKRRADQGMYEDMYYGNPYRGDNGWYQKNLGYGLRMKGIMTSAGEAKMQIKISR.

A plays an important role in the hemolytic activity region spans residues 2–11 (ELAGTIIDGA). Positions 10–29 (GASLTFEVLDKVLGELGKVS) are N-terminal region. 7 residues coordinate phosphocholine: serine 53, valine 86, serine 104, proline 106, tyrosine 132, tyrosine 136, and tyrosine 137. The trp-rich region, which is important for the binding to lipid membrane stretch occupies residues 104-119 (SVPFDYNWYSNWWDVK). The short motif at 142-144 (RGD) is the Cell attachment site element.

Octamer or nonamer in membranes. Monomer in the soluble state.

It is found in the secreted. It localises to the nematocyst. The protein resides in the target cell membrane. Its function is as follows. Pore-forming protein that forms cations-selective hydrophilic pores of around 1 nm and causes cardiac stimulation and cytolysis. Pore formation is a multi-step process that involves specific recognition of membrane sphingomyelin (but neither cholesterol nor phosphatidylcholine) using aromatic rich region and adjacent phosphocholine (POC) binding site, firm binding to the membrane (mainly driven by hydrophobic interactions) accompanied by the transfer of the N-terminal region to the lipid-water interface and finally pore formation after oligomerization of monomers. Cytolytic effects include red blood cells hemolysis, platelet aggregation and lysis, cytotoxic and cytostatic effects on fibroblasts. Lethality in mammals has been ascribed to severe vasospasm of coronary vessels, cardiac arrhythmia, and inotropic effects. The polypeptide is DELTA-stichotoxin-She4a (Stichodactyla helianthus (Sun anemone)).